Here is a 147-residue protein sequence, read N- to C-terminus: Fluoride-specific ion channel FluC 1 (147 aa).

Transmembrane regions (helical) follow at residues 29-49, 61-81, 90-110, and 118-138; these read YVYIFIGGALGALLRYLISFL, IANLTGAFVMGLLTALTIAFF, AITTGFLGALTTFSTFQLELI, and FITLLLYAVTSYVFGILLCYV. Glycine 97 and threonine 100 together coordinate Na(+).

Belongs to the fluoride channel Fluc/FEX (TC 1.A.43) family.

It is found in the cell membrane. It catalyses the reaction fluoride(in) = fluoride(out). Its activity is regulated as follows. Na(+) is not transported, but it plays an essential structural role and its presence is essential for fluoride channel function. Its function is as follows. Fluoride-specific ion channel. Important for reducing fluoride concentration in the cell, thus reducing its toxicity. The chain is Fluoride-specific ion channel FluC 1 from Staphylococcus aureus (strain MRSA252).